Here is a 531-residue protein sequence, read N- to C-terminus: Probable rhamnogalacturonate lyase A (531 aa).

The first 20 residues, 1–20, serve as a signal peptide directing secretion; that stretch reads MLSKTSLLSLLSLAAGVVNA. 2 disulfides stabilise this stretch: Cys-50/Cys-93 and Cys-184/Cys-193.

Belongs to the polysaccharide lyase 4 family.

The protein resides in the secreted. It catalyses the reaction Endotype eliminative cleavage of L-alpha-rhamnopyranosyl-(1-&gt;4)-alpha-D-galactopyranosyluronic acid bonds of rhamnogalacturonan I domains in ramified hairy regions of pectin leaving L-rhamnopyranose at the reducing end and 4-deoxy-4,5-unsaturated D-galactopyranosyluronic acid at the non-reducing end.. Functionally, pectinolytic enzymes consist of four classes of enzymes: pectin lyase, polygalacturonase, pectin methylesterase and rhamnogalacturonase. Degrades the rhamnogalacturonan I (RG-I) backbone of pectin. The polypeptide is Probable rhamnogalacturonate lyase A (rglA) (Aspergillus niger (strain ATCC MYA-4892 / CBS 513.88 / FGSC A1513)).